Here is a 1136-residue protein sequence, read N- to C-terminus: Nitric oxide synthase, inducible (1136 aa).

Residues Cys107 and Cys112 each contribute to the Zn(2+) site. Position 197 (Cys197) interacts with heme b. Residues Gln260, Trp369, Tyr370, and Glu374 each contribute to the L-arginine site. 4 residues coordinate (6R)-L-erythro-5,6,7,8-tetrahydrobiopterin: Arg378, Val459, Trp460, and Phe473. Heme b is bound at residue Tyr488. The segment at 512-532 is calmodulin-binding; it reads LSILAKAVLLASLLLQKTMAA. In terms of domain architecture, Flavodoxin-like spans 536–674; the sequence is VTVIYATETG…AFRTWAVTAF (139 aa). FMN-binding residues include Thr542, Glu543, Thr544, Lys546, Ser547, Ser588, Thr589, Ser625, Cys632, Glu658, and Gln662. Positions 727 to 967 constitute an FAD-binding FR-type domain; it reads KNVIPMKLKF…VRSADGFRLP (241 aa). Arg747 is an NADP(+) binding site. Residues His769, Arg903, Tyr905, Ser906, Thr921, Ala923, Tyr927, Val940, Cys941, and Ser942 each coordinate FAD. Residues Thr981, Arg1014, Ser1043, Arg1044, Lys1050, Tyr1052, Gln1054, and Asp1087 each contribute to the NADP(+) site.

The protein belongs to the NOS family. As to quaternary structure, homodimer. Requires heme b as cofactor. The cofactor is FAD. FMN is required as a cofactor. It depends on (6R)-L-erythro-5,6,7,8-tetrahydrobiopterin as a cofactor.

It is found in the cytoplasm. The protein resides in the cytosol. The enzyme catalyses 2 L-arginine + 3 NADPH + 4 O2 + H(+) = 2 L-citrulline + 2 nitric oxide + 3 NADP(+) + 4 H2O. Its activity is regulated as follows. Not stimulated by calcium/calmodulin. Produces nitric oxide (NO) which is a messenger molecule with diverse functions throughout the body. NO may serve as both a paracrine and autocrine signal for modulating osteoclast bone resorption. Also has nitrosylase activity and mediates cysteine S-nitrosylation of cytoplasmic target proteins such COX2. In Gallus gallus (Chicken), this protein is Nitric oxide synthase, inducible (NOS2).